Reading from the N-terminus, the 297-residue chain is Formylmethanofuran--tetrahydromethanopterin formyltransferase (297 aa).

The protein belongs to the FTR family. Homotetramer.

It is found in the cytoplasm. The enzyme catalyses N-formylmethanofuran + 5,6,7,8-tetrahydromethanopterin + H(+) = N(5)-formyl-5,6,7,8-tetrahydromethanopterin + methanofuran. The protein operates within one-carbon metabolism; methanogenesis from CO(2); 5,10-methenyl-5,6,7,8-tetrahydromethanopterin from CO(2): step 2/3. In terms of biological role, catalyzes the reversible transfer of a formyl group from formylmethanofuran (formyl-MFR) to tetrahydromethanopterin (H(4)MPT) to produce 5-formyl tetrahydromethanopterin (5-formyl-H(4)MPT) and methanofuran (MFR). This is Formylmethanofuran--tetrahydromethanopterin formyltransferase from Methanosarcina mazei (strain ATCC BAA-159 / DSM 3647 / Goe1 / Go1 / JCM 11833 / OCM 88) (Methanosarcina frisia).